Here is a 161-residue protein sequence, read N- to C-terminus: Nucleotide-binding protein Bxeno_A3642 (161 aa).

The protein belongs to the YajQ family.

In terms of biological role, nucleotide-binding protein. The sequence is that of Nucleotide-binding protein Bxeno_A3642 from Paraburkholderia xenovorans (strain LB400).